Consider the following 55-residue polypeptide: Rubredoxin-2 (55 aa).

The Rubredoxin-like domain occupies 1–54 (MRKWQCVVCGFIYDEALGLPEEGIPAGTRWEDIPADWVCPDCGVGKIDFEMIEI). Fe cation-binding residues include Cys-6, Cys-9, Cys-39, and Cys-42.

It belongs to the rubredoxin family. Fe(3+) is required as a cofactor.

The protein localises to the cytoplasm. It participates in hydrocarbon metabolism; alkane degradation. In terms of biological role, involved in the hydrocarbon hydroxylating system, which transfers electrons from NADH to rubredoxin reductase and then through rubredoxin to alkane 1 monooxygenase. The protein is Rubredoxin-2 (rubA2) of Pseudomonas aeruginosa (strain ATCC 15692 / DSM 22644 / CIP 104116 / JCM 14847 / LMG 12228 / 1C / PRS 101 / PAO1).